Reading from the N-terminus, the 343-residue chain is Uroporphyrinogen decarboxylase (343 aa).

Substrate is bound by residues R23–R27, D73, Y150, S205, and H322.

The protein belongs to the uroporphyrinogen decarboxylase family. As to quaternary structure, homodimer.

Its subcellular location is the cytoplasm. The enzyme catalyses uroporphyrinogen III + 4 H(+) = coproporphyrinogen III + 4 CO2. It functions in the pathway porphyrin-containing compound metabolism; protoporphyrin-IX biosynthesis; coproporphyrinogen-III from 5-aminolevulinate: step 4/4. Catalyzes the decarboxylation of four acetate groups of uroporphyrinogen-III to yield coproporphyrinogen-III. In Cereibacter sphaeroides (strain ATCC 17029 / ATH 2.4.9) (Rhodobacter sphaeroides), this protein is Uroporphyrinogen decarboxylase.